The primary structure comprises 315 residues: Methionyl-tRNA formyltransferase (315 aa).

113–116 is a (6S)-5,6,7,8-tetrahydrofolate binding site; the sequence is SLLP.

Belongs to the Fmt family.

It carries out the reaction L-methionyl-tRNA(fMet) + (6R)-10-formyltetrahydrofolate = N-formyl-L-methionyl-tRNA(fMet) + (6S)-5,6,7,8-tetrahydrofolate + H(+). In terms of biological role, attaches a formyl group to the free amino group of methionyl-tRNA(fMet). The formyl group appears to play a dual role in the initiator identity of N-formylmethionyl-tRNA by promoting its recognition by IF2 and preventing the misappropriation of this tRNA by the elongation apparatus. This chain is Methionyl-tRNA formyltransferase, found in Pectobacterium atrosepticum (strain SCRI 1043 / ATCC BAA-672) (Erwinia carotovora subsp. atroseptica).